Here is a 176-residue protein sequence, read N- to C-terminus: Bifunctional protein PyrR (176 aa).

The PRPP-binding motif lies at 93–105 (VILVDDVLYTGRT).

Belongs to the purine/pyrimidine phosphoribosyltransferase family. PyrR subfamily. In terms of assembly, homodimer and homohexamer; in equilibrium.

The enzyme catalyses UMP + diphosphate = 5-phospho-alpha-D-ribose 1-diphosphate + uracil. Its function is as follows. Regulates transcriptional attenuation of the pyrimidine nucleotide (pyr) operon by binding in a uridine-dependent manner to specific sites on pyr mRNA. This disrupts an antiterminator hairpin in the RNA and favors formation of a downstream transcription terminator, leading to a reduced expression of downstream genes. Also displays a weak uracil phosphoribosyltransferase activity which is not physiologically significant. The sequence is that of Bifunctional protein PyrR from Streptococcus mutans serotype c (strain ATCC 700610 / UA159).